We begin with the raw amino-acid sequence, 153 residues long: Large ribosomal subunit protein uL15 (153 aa).

It belongs to the universal ribosomal protein uL15 family. Part of the 50S ribosomal subunit.

Binds to the 23S rRNA. This is Large ribosomal subunit protein uL15 from Pelagibacter ubique (strain HTCC1062).